Here is a 445-residue protein sequence, read N- to C-terminus: MSTHLTETWEKAINIIKGELTEVSFNTWIKSINPISLENNSLKLAVPNDFTKGILESRYKDLIVNALKLLTSKKYNIDFIVTTEEKIEKNHNNEKSNIVVNDEMSTMLNPKYTFDSFVIGNSNRFAHAASLAVAESPAKAYNPLFIYGGVGLGKTHLMHAIGHYILHNNPKSQVVYVSSEKFTNELINSIKDDKNVEFRNKYRNIDILLVDDIQFIAGKERTQEEFFHTFNALYEANKQIIISSDRPPKEIPTLEDRLRSRFEWGLIADIQAPDFETRMAILKKKADVEKLNIPNEVMVYIATKIKSNIRELEGALIRIVAFSSLTNKEISVDLASEALKDIISSKQTRQVTIDIIQEVVANYYNLKIEDLKSARRTRNIAFPRQIAMYLSRKLTDMSLPKIGEEFGGRDHTTVIHAYEKISNNLKKDESLQNAIKELNKRINQK.

Residues 1–73 form a domain I, interacts with DnaA modulators region; sequence MSTHLTETWE…VNALKLLTSK (73 aa). The segment at 73-106 is domain II; that stretch reads KKYNIDFIVTTEEKIEKNHNNEKSNIVVNDEMST. The domain III, AAA+ region stretch occupies residues 107–323; the sequence is MLNPKYTFDS…GALIRIVAFS (217 aa). Residues G151, G153, K154, and T155 each contribute to the ATP site. Residues 324–445 are domain IV, binds dsDNA; that stretch reads SLTNKEISVD…KELNKRINQK (122 aa).

The protein belongs to the DnaA family. As to quaternary structure, oligomerizes as a right-handed, spiral filament on DNA at oriC.

The protein resides in the cytoplasm. Plays an essential role in the initiation and regulation of chromosomal replication. ATP-DnaA binds to the origin of replication (oriC) to initiate formation of the DNA replication initiation complex once per cell cycle. Binds the DnaA box (a 9 base pair repeat at the origin) and separates the double-stranded (ds)DNA. Forms a right-handed helical filament on oriC DNA; dsDNA binds to the exterior of the filament while single-stranded (ss)DNA is stabiized in the filament's interior. The ATP-DnaA-oriC complex binds and stabilizes one strand of the AT-rich DNA unwinding element (DUE), permitting loading of DNA polymerase. After initiation quickly degrades to an ADP-DnaA complex that is not apt for DNA replication. Binds acidic phospholipids. In Clostridium botulinum (strain Okra / Type B1), this protein is Chromosomal replication initiator protein DnaA.